The sequence spans 311 residues: Quinolinate synthase (311 aa).

Residues H25 and S42 each contribute to the iminosuccinate site. Residue C87 coordinates [4Fe-4S] cluster. Iminosuccinate contacts are provided by residues 113–115 (YIN) and S130. C175 serves as a coordination point for [4Fe-4S] cluster. Iminosuccinate-binding positions include 201 to 203 (HPE) and T218. C268 serves as a coordination point for [4Fe-4S] cluster.

This sequence belongs to the quinolinate synthase family. Type 2 subfamily. [4Fe-4S] cluster serves as cofactor.

Its subcellular location is the cytoplasm. It catalyses the reaction iminosuccinate + dihydroxyacetone phosphate = quinolinate + phosphate + 2 H2O + H(+). Its pathway is cofactor biosynthesis; NAD(+) biosynthesis; quinolinate from iminoaspartate: step 1/1. Catalyzes the condensation of iminoaspartate with dihydroxyacetone phosphate to form quinolinate. The polypeptide is Quinolinate synthase (Saccharolobus solfataricus (strain ATCC 35092 / DSM 1617 / JCM 11322 / P2) (Sulfolobus solfataricus)).